We begin with the raw amino-acid sequence, 300 residues long: Porphobilinogen deaminase (300 aa).

Cysteine 239 carries the post-translational modification S-(dipyrrolylmethanemethyl)cysteine.

It belongs to the HMBS family. As to quaternary structure, monomer. Dipyrromethane is required as a cofactor.

It catalyses the reaction 4 porphobilinogen + H2O = hydroxymethylbilane + 4 NH4(+). Its pathway is porphyrin-containing compound metabolism; protoporphyrin-IX biosynthesis; coproporphyrinogen-III from 5-aminolevulinate: step 2/4. In terms of biological role, tetrapolymerization of the monopyrrole PBG into the hydroxymethylbilane pre-uroporphyrinogen in several discrete steps. The chain is Porphobilinogen deaminase from Francisella tularensis subsp. holarctica (strain OSU18).